A 100-amino-acid chain; its full sequence is Urease subunit gamma (100 aa).

The protein belongs to the urease gamma subunit family. In terms of assembly, heterotrimer of UreA (gamma), UreB (beta) and UreC (alpha) subunits. Three heterotrimers associate to form the active enzyme.

The protein resides in the cytoplasm. It catalyses the reaction urea + 2 H2O + H(+) = hydrogencarbonate + 2 NH4(+). Its pathway is nitrogen metabolism; urea degradation; CO(2) and NH(3) from urea (urease route): step 1/1. This is Urease subunit gamma from Mycobacteroides abscessus (strain ATCC 19977 / DSM 44196 / CCUG 20993 / CIP 104536 / JCM 13569 / NCTC 13031 / TMC 1543 / L948) (Mycobacterium abscessus).